Reading from the N-terminus, the 93-residue chain is Allatostatin C (93 aa).

An N-terminal signal peptide occupies residues 1–23 (MSSVRNIAALALVLLVLAEWSAA). Positions 24–61 (MPTTDKDKERLLNTVDLIDDDGSIETALINYLFTKQIV) are excised as a propeptide. An intrachain disulfide couples cysteine 83 to cysteine 90.

It localises to the secreted. Functionally, inhibits juvenile hormone biosynthesis. This chain is Allatostatin C, found in Camponotus floridanus (Florida carpenter ant).